The following is a 72-amino-acid chain: Translation initiation factor IF-1 (72 aa).

An S1-like domain is found at 1 to 72 (MSKSDYIELE…TKGRIIFRHK (72 aa)).

The protein belongs to the IF-1 family. In terms of assembly, component of the 30S ribosomal translation pre-initiation complex which assembles on the 30S ribosome in the order IF-2 and IF-3, IF-1 and N-formylmethionyl-tRNA(fMet); mRNA recruitment can occur at any time during PIC assembly.

It is found in the cytoplasm. One of the essential components for the initiation of protein synthesis. Stabilizes the binding of IF-2 and IF-3 on the 30S subunit to which N-formylmethionyl-tRNA(fMet) subsequently binds. Helps modulate mRNA selection, yielding the 30S pre-initiation complex (PIC). Upon addition of the 50S ribosomal subunit IF-1, IF-2 and IF-3 are released leaving the mature 70S translation initiation complex. The sequence is that of Translation initiation factor IF-1 from Ruthia magnifica subsp. Calyptogena magnifica.